A 311-amino-acid polypeptide reads, in one-letter code: Protoheme IX farnesyltransferase (311 aa).

Transmembrane regions (helical) follow at residues 32-52 (VMSL…VVVD), 53-73 (PLYG…AGAL), 98-118 (ISRG…VFLM), 120-140 (VLIN…YIVI), 153-173 (IVIG…AATG), 180-200 (FLLF…LCLF), 226-246 (ILVY…TGYA), 248-268 (IIYG…AYRL), and 285-305 (FFFS…EFLI).

The protein belongs to the UbiA prenyltransferase family. Protoheme IX farnesyltransferase subfamily.

It localises to the cell inner membrane. It catalyses the reaction heme b + (2E,6E)-farnesyl diphosphate + H2O = Fe(II)-heme o + diphosphate. The protein operates within porphyrin-containing compound metabolism; heme O biosynthesis; heme O from protoheme: step 1/1. In terms of biological role, converts heme B (protoheme IX) to heme O by substitution of the vinyl group on carbon 2 of heme B porphyrin ring with a hydroxyethyl farnesyl side group. This chain is Protoheme IX farnesyltransferase, found in Bartonella bacilliformis (strain ATCC 35685 / KC583 / Herrer 020/F12,63).